Here is a 76-residue protein sequence, read N- to C-terminus: Esculentin-2-ALa (76 aa).

The first 22 residues, 1–22 (MFTLKKSMLLLFFLGTISLSLC), serve as a signal peptide directing secretion. Positions 23–39 (EEERNADEDDGEKEVKR) are excised as a propeptide. Cys70 and Cys76 form a disulfide bridge.

In terms of tissue distribution, expressed by the skin glands.

Its subcellular location is the secreted. In terms of biological role, antimicrobial peptide with activity against Gram-positive and Gram-negative bacteria and against fungi. Has been tested against S.aureus (MIC=2.5 ug/mL), B.pumilus (MIC=2.5 ug/mL), B.cereus (MIC=7.5 ug/mL), E.coli (MIC=12.5 ug/mL), B.dysenteriae (MIC=7.5 ug/mL), A.cacoaceticus (MIC=25.0 ug/mL), P.aeruginosa (MIC=50.0 ug/mL) and C.albicans (MIC=2.5 ug/mL). Also shows a weak hemolytic activity. This Amolops loloensis (Lolokou Sucker Frog) protein is Esculentin-2-ALa.